The chain runs to 552 residues: MKRSDVFLRPEYAPHRALWRASGLIDEELRRPLIGVANSWNEIVPGHVHLDKVAEAVKAGIRMAGGTPLEFGTIAVCDGIAMGHEGMRYSLPSREVIADTVEIMVEAHRLDAVVMVTNCDKITPGFLLAAARLEVPVILINGGPMMPGVYGKERIDFKDLMERMNVLIKEGRTEELRKLEESALPGPGSCAGLFTANTMNMLSEAMGLMLPGASTVPAVEARRLWYAKLTGMRIVKMVEEGLTPDKILTRKALENAIAVDMALGGSTNSVLHLEALAYELGIDLPLEVFDEISRKVPHIASISPSGRHFVVDLDRAGGIPAVLKELGEAGLIHKDALTVTGKTVWENVKDAAVLDREVIRPLDNPYSPFGGLAILKGSLAPNGAVVKASAVKRELWKFKGVARVFDREEDAVKAIRGGEIEPGTVIVIRYEGPRGGPGMREMLTATAAVMALGLGDKVALVTDGRFSGATRGPAIGHVSPEAAAGGPIALVQDGDEIVIDIEKRRLDLLVDEKELEERRARWKPKVKPLRRGILRRYAKMALSADKGGALEY.

Mg(2+) is bound at residue D78. Position 119 (C119) interacts with [2Fe-2S] cluster. Mg(2+)-binding residues include D120 and K121. K121 carries the N6-carboxylysine modification. Position 190 (C190) interacts with [2Fe-2S] cluster. E441 contributes to the Mg(2+) binding site. Residue S467 is the Proton acceptor of the active site.

Belongs to the IlvD/Edd family. Homodimer. [2Fe-2S] cluster serves as cofactor. The cofactor is Mg(2+).

The enzyme catalyses (2R)-2,3-dihydroxy-3-methylbutanoate = 3-methyl-2-oxobutanoate + H2O. It carries out the reaction (2R,3R)-2,3-dihydroxy-3-methylpentanoate = (S)-3-methyl-2-oxopentanoate + H2O. It functions in the pathway amino-acid biosynthesis; L-isoleucine biosynthesis; L-isoleucine from 2-oxobutanoate: step 3/4. The protein operates within amino-acid biosynthesis; L-valine biosynthesis; L-valine from pyruvate: step 3/4. Functionally, functions in the biosynthesis of branched-chain amino acids. Catalyzes the dehydration of (2R,3R)-2,3-dihydroxy-3-methylpentanoate (2,3-dihydroxy-3-methylvalerate) into 2-oxo-3-methylpentanoate (2-oxo-3-methylvalerate) and of (2R)-2,3-dihydroxy-3-methylbutanoate (2,3-dihydroxyisovalerate) into 2-oxo-3-methylbutanoate (2-oxoisovalerate), the penultimate precursor to L-isoleucine and L-valine, respectively. This is Dihydroxy-acid dehydratase from Ignicoccus hospitalis (strain KIN4/I / DSM 18386 / JCM 14125).